Here is a 165-residue protein sequence, read N- to C-terminus: Large ribosomal subunit protein uL10 (165 aa).

This sequence belongs to the universal ribosomal protein uL10 family. As to quaternary structure, part of the ribosomal stalk of the 50S ribosomal subunit. The N-terminus interacts with L11 and the large rRNA to form the base of the stalk. The C-terminus forms an elongated spine to which L12 dimers bind in a sequential fashion forming a multimeric L10(L12)X complex.

Forms part of the ribosomal stalk, playing a central role in the interaction of the ribosome with GTP-bound translation factors. The protein is Large ribosomal subunit protein uL10 of Paraburkholderia phymatum (strain DSM 17167 / CIP 108236 / LMG 21445 / STM815) (Burkholderia phymatum).